Consider the following 289-residue polypeptide: Phosphatidylglycerol--prolipoprotein diacylglyceryl transferase (289 aa).

A run of 4 helical transmembrane segments spans residues 21 to 41, 53 to 73, 95 to 115, and 122 to 142; these read IGPL…LLGI, IDPN…IPAA, IWHG…ALIL, and IPIW…QAIG. Arg-143 is an a 1,2-diacyl-sn-glycero-3-phospho-(1'-sn-glycerol) binding site. 3 helical membrane-spanning segments follow: residues 182-202, 215-235, and 247-267; these read PTFL…IWLF, GVMT…IEGL, and IAQM…VWIY.

The protein belongs to the Lgt family.

The protein localises to the cell inner membrane. It catalyses the reaction L-cysteinyl-[prolipoprotein] + a 1,2-diacyl-sn-glycero-3-phospho-(1'-sn-glycerol) = an S-1,2-diacyl-sn-glyceryl-L-cysteinyl-[prolipoprotein] + sn-glycerol 1-phosphate + H(+). It functions in the pathway protein modification; lipoprotein biosynthesis (diacylglyceryl transfer). Functionally, catalyzes the transfer of the diacylglyceryl group from phosphatidylglycerol to the sulfhydryl group of the N-terminal cysteine of a prolipoprotein, the first step in the formation of mature lipoproteins. The sequence is that of Phosphatidylglycerol--prolipoprotein diacylglyceryl transferase from Synechococcus elongatus (strain ATCC 33912 / PCC 7942 / FACHB-805) (Anacystis nidulans R2).